Here is a 769-residue protein sequence, read N- to C-terminus: Glutathione biosynthesis bifunctional protein GshAB (769 aa).

Positions 1–347 (MLDSFKEDPN…QLADENENNI (347 aa)) are glutamate--cysteine ligase. Residues 514-768 (KLVLAEHDIR…IGDKILDFLF (255 aa)) form the ATP-grasp domain. Position 541–599 (541–599 (SLFEDKQIVVKPKSTNYGWGISIFKNKFTLEDYQEALNIAFSYDSSVIIEEFIPGDEFR)) interacts with ATP. Residues D721, E738, and N740 each contribute to the Mg(2+) site. Positions 721, 738, and 740 each coordinate Mn(2+).

This sequence in the N-terminal section; belongs to the glutamate--cysteine ligase type 1 family. Type 2 subfamily. Monomer. Mg(2+) serves as cofactor. It depends on Mn(2+) as a cofactor.

The catalysed reaction is L-cysteine + L-glutamate + ATP = gamma-L-glutamyl-L-cysteine + ADP + phosphate + H(+). It catalyses the reaction gamma-L-glutamyl-L-cysteine + glycine + ATP = glutathione + ADP + phosphate + H(+). It participates in sulfur metabolism; glutathione biosynthesis; glutathione from L-cysteine and L-glutamate: step 1/2. Its pathway is sulfur metabolism; glutathione biosynthesis; glutathione from L-cysteine and L-glutamate: step 2/2. In terms of biological role, synthesizes glutathione from L-glutamate and L-cysteine via gamma-L-glutamyl-L-cysteine. The polypeptide is Glutathione biosynthesis bifunctional protein GshAB (Listeria monocytogenes serovar 1/2a (strain ATCC BAA-679 / EGD-e)).